The sequence spans 209 residues: Small ribosomal subunit protein uS4 (209 aa).

In terms of domain architecture, S4 RNA-binding spans Ala98–Val161.

Belongs to the universal ribosomal protein uS4 family. Part of the 30S ribosomal subunit. Contacts protein S5. The interaction surface between S4 and S5 is involved in control of translational fidelity.

One of the primary rRNA binding proteins, it binds directly to 16S rRNA where it nucleates assembly of the body of the 30S subunit. Functionally, with S5 and S12 plays an important role in translational accuracy. In Thermotoga petrophila (strain ATCC BAA-488 / DSM 13995 / JCM 10881 / RKU-1), this protein is Small ribosomal subunit protein uS4.